The primary structure comprises 271 residues: Formamidopyrimidine-DNA glycosylase (271 aa).

The active-site Schiff-base intermediate with DNA is the P2. E3 serves as the catalytic Proton donor. The Proton donor; for beta-elimination activity role is filled by K57. DNA contacts are provided by H90, R109, and K151. The segment at 236–270 adopts an FPG-type zinc-finger fold; it reads HVYGRGGESCTQCGNLLSEIKLGQRATVFCGLCQT. Catalysis depends on R260, which acts as the Proton donor; for delta-elimination activity.

Belongs to the FPG family. In terms of assembly, monomer. Zn(2+) serves as cofactor.

It carries out the reaction Hydrolysis of DNA containing ring-opened 7-methylguanine residues, releasing 2,6-diamino-4-hydroxy-5-(N-methyl)formamidopyrimidine.. It catalyses the reaction 2'-deoxyribonucleotide-(2'-deoxyribose 5'-phosphate)-2'-deoxyribonucleotide-DNA = a 3'-end 2'-deoxyribonucleotide-(2,3-dehydro-2,3-deoxyribose 5'-phosphate)-DNA + a 5'-end 5'-phospho-2'-deoxyribonucleoside-DNA + H(+). In terms of biological role, involved in base excision repair of DNA damaged by oxidation or by mutagenic agents. Acts as a DNA glycosylase that recognizes and removes damaged bases. Has a preference for oxidized purines, such as 7,8-dihydro-8-oxoguanine (8-oxoG). Has AP (apurinic/apyrimidinic) lyase activity and introduces nicks in the DNA strand. Cleaves the DNA backbone by beta-delta elimination to generate a single-strand break at the site of the removed base with both 3'- and 5'-phosphates. This is Formamidopyrimidine-DNA glycosylase from Shewanella woodyi (strain ATCC 51908 / MS32).